A 152-amino-acid chain; its full sequence is UPF0179 protein HQ_3004A (152 aa).

Belongs to the UPF0179 family.

The sequence is that of UPF0179 protein HQ_3004A from Haloquadratum walsbyi (strain DSM 16790 / HBSQ001).